The chain runs to 295 residues: uncharacterized protein (295 aa).

It belongs to the NAD(P)-dependent epimerase/dehydratase family.

This is an uncharacterized protein from Schizosaccharomyces pombe (strain 972 / ATCC 24843) (Fission yeast).